A 628-amino-acid chain; its full sequence is Probable alpha-L-arabinofuranosidase A (628 aa).

The signal sequence occupies residues 1 to 25 (MVAFSALSGVSALSLLLCLVQHAHG). Residues asparagine 36, asparagine 51, asparagine 74, asparagine 152, asparagine 171, asparagine 260, asparagine 359, and asparagine 493 are each glycosylated (N-linked (GlcNAc...) asparagine).

Belongs to the glycosyl hydrolase 51 family.

It localises to the secreted. The catalysed reaction is Hydrolysis of terminal non-reducing alpha-L-arabinofuranoside residues in alpha-L-arabinosides.. It functions in the pathway glycan metabolism; L-arabinan degradation. Alpha-L-arabinofuranosidase involved in the degradation of arabinoxylan, a major component of plant hemicellulose. Acts only on small linear 1,5-alpha-linked L-arabinofuranosyl oligosaccharides. This chain is Probable alpha-L-arabinofuranosidase A (abfA), found in Aspergillus awamori (Black koji mold).